Reading from the N-terminus, the 115-residue chain is Androgen-binding protein homolog (115 aa).

The first 23 residues, 1–23 (MKGTLLLLALLVTGELGFQTTEA), serve as a signal peptide directing secretion.

It belongs to the secretoglobin family.

Its subcellular location is the secreted. In Mesocricetus auratus (Golden hamster), this protein is Androgen-binding protein homolog.